Reading from the N-terminus, the 232-residue chain is Thiamine import ATP-binding protein ThiQ (232 aa).

An ABC transporter domain is found at 2 to 230 (LKLTDITWLY…KASASAILGI (229 aa)). 32–39 (GPSGAGKS) is an ATP binding site.

This sequence belongs to the ABC transporter superfamily. Thiamine importer (TC 3.A.1.19.1) family. As to quaternary structure, the complex is composed of two ATP-binding proteins (ThiQ), two transmembrane proteins (ThiP) and a solute-binding protein (ThiB).

Its subcellular location is the cell inner membrane. The catalysed reaction is thiamine(out) + ATP + H2O = thiamine(in) + ADP + phosphate + H(+). In terms of biological role, part of the ABC transporter complex ThiBPQ involved in thiamine import. Responsible for energy coupling to the transport system. This Shigella boydii serotype 4 (strain Sb227) protein is Thiamine import ATP-binding protein ThiQ.